A 341-amino-acid chain; its full sequence is Mitochondrial ubiquitin ligase activator of nfkb 1-A (341 aa).

The Cytoplasmic portion of the chain corresponds to Met1–Pro5. Residues Val6–Tyr26 form a helical membrane-spanning segment. Residues Arg27–Glu233 are Mitochondrial intermembrane-facing. A helical transmembrane segment spans residues Val234–Gly254. At Arg255–Ala341 the chain is on the cytoplasmic side. The RING-type zinc finger occupies Cys292–Arg329.

As to quaternary structure, homooligomer.

It localises to the mitochondrion outer membrane. It catalyses the reaction S-ubiquitinyl-[E2 ubiquitin-conjugating enzyme]-L-cysteine + [acceptor protein]-L-lysine = [E2 ubiquitin-conjugating enzyme]-L-cysteine + N(6)-ubiquitinyl-[acceptor protein]-L-lysine.. Its pathway is protein modification; protein ubiquitination. E3 ubiquitin-protein ligase that plays a role in the control of mitochondrial morphology. Promotes mitochondrial fragmentation and influences mitochondrial localization. Inhibits cell growth. E3 ubiquitin ligases accept ubiquitin from an E2 ubiquitin-conjugating enzyme in the form of a thioester and then directly transfer the ubiquitin to targeted substrates. This is Mitochondrial ubiquitin ligase activator of nfkb 1-A (mul1a) from Danio rerio (Zebrafish).